Reading from the N-terminus, the 465-residue chain is Cysteine--tRNA ligase (465 aa).

Position 27 (Cys-27) interacts with Zn(2+). The short motif at 29–39 (PTVYDDAHLGH) is the 'HIGH' region element. Positions 207, 237, and 241 each coordinate Zn(2+). The short motif at 269 to 273 (KMSKS) is the 'KMSKS' region element. Lys-272 contributes to the ATP binding site.

The protein belongs to the class-I aminoacyl-tRNA synthetase family. Monomer. Zn(2+) is required as a cofactor.

The protein resides in the cytoplasm. It catalyses the reaction tRNA(Cys) + L-cysteine + ATP = L-cysteinyl-tRNA(Cys) + AMP + diphosphate. The polypeptide is Cysteine--tRNA ligase (Helicobacter pylori (strain P12)).